The chain runs to 157 residues: Endoribonuclease YbeY (157 aa).

The Zn(2+) site is built by histidine 118, histidine 122, and histidine 128.

The protein belongs to the endoribonuclease YbeY family. Zn(2+) is required as a cofactor.

It localises to the cytoplasm. Functionally, single strand-specific metallo-endoribonuclease involved in late-stage 70S ribosome quality control and in maturation of the 3' terminus of the 16S rRNA. This is Endoribonuclease YbeY from Bordetella bronchiseptica (strain ATCC BAA-588 / NCTC 13252 / RB50) (Alcaligenes bronchisepticus).